The sequence spans 393 residues: Seven-bladed beta-propeller protein Rv1057 (393 aa).

The interval 208-230 (DGGRIGSRSRSRQKSSKPRGNQA) is disordered. Over residues 214–224 (SRSRSRQKSSK) the composition is skewed to basic residues.

Functionally, may play an important role in host-pathogen interactions and in ESAT-6 secretion. This Mycobacterium tuberculosis (strain ATCC 25618 / H37Rv) protein is Seven-bladed beta-propeller protein Rv1057.